The sequence spans 473 residues: Phosphoglucosamine mutase (473 aa).

Ser102 (phosphoserine intermediate) is an active-site residue. Mg(2+) is bound by residues Ser102, Asp248, Asp250, and Asp252. Residue Ser102 is modified to Phosphoserine.

Belongs to the phosphohexose mutase family. Requires Mg(2+) as cofactor. Activated by phosphorylation.

The enzyme catalyses alpha-D-glucosamine 1-phosphate = D-glucosamine 6-phosphate. Its function is as follows. Catalyzes the conversion of glucosamine-6-phosphate to glucosamine-1-phosphate. This is Phosphoglucosamine mutase from Rhodospirillum centenum (strain ATCC 51521 / SW).